The following is a 263-amino-acid chain: Probable septum site-determining protein MinC (263 aa).

A disordered region spans residues 107 to 159 (LPPSGARERPLDIKDSAPRKPAEEPSPSAGEARPEPAKAEEKPADPVSRPTKV). 2 stretches are compositionally biased toward basic and acidic residues: residues 112-129 (ARER…KPAE) and 138-150 (ARPE…EKPA).

It belongs to the MinC family. Interacts with MinD and FtsZ.

In terms of biological role, cell division inhibitor that blocks the formation of polar Z ring septums. Rapidly oscillates between the poles of the cell to destabilize FtsZ filaments that have formed before they mature into polar Z rings. Prevents FtsZ polymerization. The polypeptide is Probable septum site-determining protein MinC (Pseudomonas aeruginosa (strain UCBPP-PA14)).